The chain runs to 456 residues: Bifunctional protein GlmU (456 aa).

A pyrophosphorylase region spans residues 1-229; sequence MLNSAMSVVI…ISETDGVNNR (229 aa). UDP-N-acetyl-alpha-D-glucosamine is bound by residues 11–14, K25, Q76, 81–82, 103–105, G140, E154, N169, and N227; these read LAAG, GT, and YGD. A Mg(2+)-binding site is contributed by D105. N227 serves as a coordination point for Mg(2+). The interval 230-250 is linker; sequence LQLSRLERIYQAEQAEKLLLS. The interval 251 to 456 is N-acetyltransferase; sequence GVMLRDPARF…QGWQRPVKKK (206 aa). UDP-N-acetyl-alpha-D-glucosamine contacts are provided by R333 and K351. Residue H363 is the Proton acceptor of the active site. 2 residues coordinate UDP-N-acetyl-alpha-D-glucosamine: Y366 and N377. Acetyl-CoA is bound by residues A380, 386–387, S405, A423, and R440; that span reads NY.

This sequence in the N-terminal section; belongs to the N-acetylglucosamine-1-phosphate uridyltransferase family. The protein in the C-terminal section; belongs to the transferase hexapeptide repeat family. Homotrimer. Mg(2+) is required as a cofactor.

The protein resides in the cytoplasm. The catalysed reaction is alpha-D-glucosamine 1-phosphate + acetyl-CoA = N-acetyl-alpha-D-glucosamine 1-phosphate + CoA + H(+). It carries out the reaction N-acetyl-alpha-D-glucosamine 1-phosphate + UTP + H(+) = UDP-N-acetyl-alpha-D-glucosamine + diphosphate. It participates in nucleotide-sugar biosynthesis; UDP-N-acetyl-alpha-D-glucosamine biosynthesis; N-acetyl-alpha-D-glucosamine 1-phosphate from alpha-D-glucosamine 6-phosphate (route II): step 2/2. The protein operates within nucleotide-sugar biosynthesis; UDP-N-acetyl-alpha-D-glucosamine biosynthesis; UDP-N-acetyl-alpha-D-glucosamine from N-acetyl-alpha-D-glucosamine 1-phosphate: step 1/1. It functions in the pathway bacterial outer membrane biogenesis; LPS lipid A biosynthesis. Functionally, catalyzes the last two sequential reactions in the de novo biosynthetic pathway for UDP-N-acetylglucosamine (UDP-GlcNAc). The C-terminal domain catalyzes the transfer of acetyl group from acetyl coenzyme A to glucosamine-1-phosphate (GlcN-1-P) to produce N-acetylglucosamine-1-phosphate (GlcNAc-1-P), which is converted into UDP-GlcNAc by the transfer of uridine 5-monophosphate (from uridine 5-triphosphate), a reaction catalyzed by the N-terminal domain. This Salmonella choleraesuis (strain SC-B67) protein is Bifunctional protein GlmU.